The primary structure comprises 187 residues: DNA-directed RNA polymerase subunit Rpo7 (187 aa).

One can recognise an S1 motif domain in the interval 82-166 (YELIEGEVVD…RGSKIALTMR (85 aa)).

It belongs to the eukaryotic RPB7/RPC8 RNA polymerase subunit family. In terms of assembly, part of the RNA polymerase complex. Forms a stalk with Rpo4 that extends from the main structure.

The protein localises to the cytoplasm. The enzyme catalyses RNA(n) + a ribonucleoside 5'-triphosphate = RNA(n+1) + diphosphate. DNA-dependent RNA polymerase (RNAP) catalyzes the transcription of DNA into RNA using the four ribonucleoside triphosphates as substrates. This Methanocaldococcus jannaschii (strain ATCC 43067 / DSM 2661 / JAL-1 / JCM 10045 / NBRC 100440) (Methanococcus jannaschii) protein is DNA-directed RNA polymerase subunit Rpo7.